We begin with the raw amino-acid sequence, 412 residues long: MKFLDQAKIFVKSGDGGAGCCSFRREKHIEFGGPDGGDGGRGGDVILECVANLNTLIDYRYQQHFKAKIGNHGQGRNKTGGKGDDVILKVPVGTQVLDEEKETVLADLTSAGQTMVLLRGGDGGFGNMHYKSSTNQAPRRADEGWPGEERWIWLRLKMIADAGLVGLPNAGKSTFLAAVTRARPKIADYPFTTLHPNLGVVTLGEEEFVIADIPGLIEGAHEGAGIGDRFLGHIERCRVLLHLIDGTQDDVAEAYRVVRHELAAYGGGLDEKPEVVALNKCDSLTADDIELKLMELSEACGQEVLPLSGVSGVGLKPILARLFTHIREAREAEPAVPAASPIFGSSKRGAPTFQQRKRKLQAEDDEFAGGHWGADGEWIWHSADNDGDEVDEDYDDEDLEEVADDEEDDAEE.

The 159-residue stretch at 1–159 (MKFLDQAKIF…RWIWLRLKMI (159 aa)) folds into the Obg domain. Residues 160–327 (ADAGLVGLPN…ILARLFTHIR (168 aa)) enclose the OBG-type G domain. GTP-binding positions include 166-173 (GLPNAGKS), 191-195 (FTTLH), 212-215 (DIPG), 279-282 (NKCD), and 308-310 (SGV). The Mg(2+) site is built by serine 173 and threonine 193. Residues 335 to 412 (AVPAASPIFG…ADDEEDDAEE (78 aa)) form a disordered region. Over residues 385–412 (NDGDEVDEDYDDEDLEEVADDEEDDAEE) the composition is skewed to acidic residues.

The protein belongs to the TRAFAC class OBG-HflX-like GTPase superfamily. OBG GTPase family. In terms of assembly, monomer. The cofactor is Mg(2+).

The protein localises to the cytoplasm. An essential GTPase which binds GTP, GDP and possibly (p)ppGpp with moderate affinity, with high nucleotide exchange rates and a fairly low GTP hydrolysis rate. Plays a role in control of the cell cycle, stress response, ribosome biogenesis and in those bacteria that undergo differentiation, in morphogenesis control. This chain is GTPase Obg, found in Paramagnetospirillum magneticum (strain ATCC 700264 / AMB-1) (Magnetospirillum magneticum).